Reading from the N-terminus, the 333-residue chain is Probable cytosolic iron-sulfur protein assembly protein 1 (333 aa).

WD repeat units follow at residues 12–50 (LHDD…IIEE), 55–94 (AHKK…YNDE), 107–146 (GHEN…EEFE), 153–192 (EHSQ…WECC), 197–238 (GHEG…GEYE), 250–288 (AHTR…WIVE), and 298–333 (YETN…FDEN).

This sequence belongs to the WD repeat CIA1 family. In terms of assembly, interacts with NAR1.

Its subcellular location is the cytoplasm. It is found in the nucleus. Its function is as follows. Essential component of the cytosolic iron-sulfur (Fe/S) protein assembly machinery. Required for the maturation of extramitochondrial Fe/S proteins. This chain is Probable cytosolic iron-sulfur protein assembly protein 1, found in Kluyveromyces lactis (strain ATCC 8585 / CBS 2359 / DSM 70799 / NBRC 1267 / NRRL Y-1140 / WM37) (Yeast).